Reading from the N-terminus, the 305-residue chain is Phosphatidylglycerol--prolipoprotein diacylglyceryl transferase (305 aa).

Transmembrane regions (helical) follow at residues 10–30 (FLIS…GAII), 59–79 (LMLG…AFEW), and 92–112 (LTTG…STVI). Arginine 140 is a binding site for a 1,2-diacyl-sn-glycero-3-phospho-(1'-sn-glycerol). 2 helical membrane-spanning segments follow: residues 182–202 (LFHP…GILL) and 260–280 (IRVA…LIFL).

It belongs to the Lgt family.

It localises to the cell membrane. The enzyme catalyses L-cysteinyl-[prolipoprotein] + a 1,2-diacyl-sn-glycero-3-phospho-(1'-sn-glycerol) = an S-1,2-diacyl-sn-glyceryl-L-cysteinyl-[prolipoprotein] + sn-glycerol 1-phosphate + H(+). It functions in the pathway protein modification; lipoprotein biosynthesis (diacylglyceryl transfer). Functionally, catalyzes the transfer of the diacylglyceryl group from phosphatidylglycerol to the sulfhydryl group of the N-terminal cysteine of a prolipoprotein, the first step in the formation of mature lipoproteins. The polypeptide is Phosphatidylglycerol--prolipoprotein diacylglyceryl transferase (Chloroflexus aggregans (strain MD-66 / DSM 9485)).